Reading from the N-terminus, the 475-residue chain is Ribulose bisphosphate carboxylase large chain (475 aa).

The propeptide occupies 1 to 2 (MS). N-acetylproline is present on P3. K14 is subject to N6,N6,N6-trimethyllysine. Substrate contacts are provided by N123 and T173. The Proton acceptor role is filled by K175. K177 is a binding site for substrate. Residues K201, D203, and E204 each coordinate Mg(2+). N6-carboxylysine is present on K201. H294 acts as the Proton acceptor in catalysis. 3 residues coordinate substrate: R295, H327, and S379.

Belongs to the RuBisCO large chain family. Type I subfamily. As to quaternary structure, heterohexadecamer of 8 large chains and 8 small chains; disulfide-linked. The disulfide link is formed within the large subunit homodimers. Mg(2+) is required as a cofactor. Post-translationally, the disulfide bond which can form in the large chain dimeric partners within the hexadecamer appears to be associated with oxidative stress and protein turnover.

It localises to the plastid. The protein resides in the chloroplast. It carries out the reaction 2 (2R)-3-phosphoglycerate + 2 H(+) = D-ribulose 1,5-bisphosphate + CO2 + H2O. It catalyses the reaction D-ribulose 1,5-bisphosphate + O2 = 2-phosphoglycolate + (2R)-3-phosphoglycerate + 2 H(+). In terms of biological role, ruBisCO catalyzes two reactions: the carboxylation of D-ribulose 1,5-bisphosphate, the primary event in carbon dioxide fixation, as well as the oxidative fragmentation of the pentose substrate in the photorespiration process. Both reactions occur simultaneously and in competition at the same active site. This Plumbago auriculata (Cape leadwort) protein is Ribulose bisphosphate carboxylase large chain.